Here is a 1167-residue protein sequence, read N- to C-terminus: Phenyloxazoline synthase MbtB (1167 aa).

In terms of domain architecture, Carrier 1 spans 2-78; it reads EAVVTSSQTV…AWTRLVGERT (77 aa). Serine 39 is subject to O-(pantetheine 4'-phosphoryl)serine. Residues 78–100 are disordered; sequence TAESPGAATQSGDTAASAGDPDA. The interval 98-390 is condensation/cyclization; the sequence is PDAPFPLAPI…SSLMLDVDFT (293 aa). An adenylation region spans residues 575–967; it reads TYAELRERVL…RIAGVEAAVA (393 aa). In terms of domain architecture, Carrier 2 spans 1054–1130; that stretch reads VPSTALERAL…ALARRLVDHE (77 aa). An O-(pantetheine 4'-phosphoryl)serine modification is found at serine 1089.

It belongs to the ATP-dependent AMP-binding enzyme family. MbtB subfamily. It depends on pantetheine 4'-phosphate as a cofactor. Post-translationally, 4'-phosphopantetheine is transferred from CoA to a specific serine in each of the two carrier protein domains, leading to their activation from apo to holo forms.

The protein operates within siderophore biosynthesis; mycobactin biosynthesis. Involved in the initial steps of the mycobactin biosynthetic pathway. Putatively couples activated salicylic acid with serine or threonine and cyclizes this precursor to the hydroxyphenyloxazoline ring system present in this class of siderophores. The sequence is that of Phenyloxazoline synthase MbtB (mbtB) from Mycobacterium sp. (strain MCS).